A 290-amino-acid polypeptide reads, in one-letter code: UPF0761 membrane protein YihY (290 aa).

The next 6 helical transmembrane spans lie at 44 to 64, 104 to 124, 140 to 160, 183 to 203, 210 to 230, and 244 to 264; these read LLSL…FPMF, VGAC…DSAL, FAVY…SLAI, IFPL…VPTI, AIVG…GFAL, and VLAV…IVLL.

It belongs to the UPF0761 family.

It is found in the cell inner membrane. The chain is UPF0761 membrane protein YihY from Escherichia coli O1:K1 / APEC.